Reading from the N-terminus, the 172-residue chain is Ribosome maturation factor RimM (172 aa).

In terms of domain architecture, PRC barrel spans 99–171 (DDIPTWNYFI…LLTVEVPDGL (73 aa)).

This sequence belongs to the RimM family. In terms of assembly, binds ribosomal protein uS19.

Its subcellular location is the cytoplasm. Functionally, an accessory protein needed during the final step in the assembly of 30S ribosomal subunit, possibly for assembly of the head region. Essential for efficient processing of 16S rRNA. May be needed both before and after RbfA during the maturation of 16S rRNA. It has affinity for free ribosomal 30S subunits but not for 70S ribosomes. The protein is Ribosome maturation factor RimM of Phocaeicola vulgatus (strain ATCC 8482 / DSM 1447 / JCM 5826 / CCUG 4940 / NBRC 14291 / NCTC 11154) (Bacteroides vulgatus).